The chain runs to 290 residues: Glycine--tRNA ligase alpha subunit (290 aa).

It belongs to the class-II aminoacyl-tRNA synthetase family. In terms of assembly, tetramer of two alpha and two beta subunits.

The protein resides in the cytoplasm. The enzyme catalyses tRNA(Gly) + glycine + ATP = glycyl-tRNA(Gly) + AMP + diphosphate. The chain is Glycine--tRNA ligase alpha subunit from Prochlorococcus marinus (strain NATL1A).